The following is a 246-amino-acid chain: mRNA-decapping protein g5R (246 aa).

The Nudix hydrolase domain maps to 91-239 (KYQKFKKNWL…IIGPAFNFIK (149 aa)). The short motif at 128–149 (GKPKENESDLACAIREFEEETG) is the Nudix box element. Glutamate 134 lines the Mg(2+) pocket. The Nucleophile role is filled by glutamate 143. Mg(2+) is bound by residues glutamate 147 and glutamate 169.

This sequence belongs to the Nudix hydrolase family. DIPP subfamily. As to quaternary structure, interacts with host RPL23A. Mg(2+) is required as a cofactor. The cofactor is Mn(2+).

The protein localises to the host rough endoplasmic reticulum. The enzyme catalyses diphospho-myo-inositol polyphosphate + H2O = myo-inositol polyphosphate + phosphate.. Its function is as follows. Decapping enzyme required for the removal of the 5'-end m7GpppN cap tethered to viral and host mRNAs to allow their decay in cells. May therefore accelerate viral and cellular mRNA turnover to eliminate competing host mRNAs and allow stage-specific synthesis of viral proteins. Acceleration of the turnover of cellular transcripts may even promote the shutoff of host protein synthesis. In addition to the mRNA cap, g5R also efficiently hydrolyzes diphosphoinositol polyphosphates. Down-regulation of the level of PP-InsP5 (diphosphoinositol pentakisphosphate) may play a role in viral manipulation of the cellular secretory pathway, a step necessary for the formation of virions. Binds viral and cellular poly(A) mRNAs, thereby decreasing both types of mRNAs. In African swine fever virus (isolate Pig/Kenya/KEN-50/1950) (ASFV), this protein is mRNA-decapping protein g5R.